The chain runs to 460 residues: Heme sensor protein HssS (460 aa).

Helical transmembrane passes span 11–31 (IYTI…TNII) and 164–184 (IFLA…VISS). In terms of domain architecture, HAMP spans 186-238 (YAIIKPIQQLKRATERLMHGNFDEVIHVTRKDEFGTLQYRFDKMRLSLKQLDD). The 211-residue stretch at 246 to 456 (NVSHEIKTPL…TFTITFKKVP (211 aa)) folds into the Histidine kinase domain. H249 bears the Phosphohistidine; by autocatalysis mark.

Autophosphorylated.

It localises to the cell membrane. It catalyses the reaction ATP + protein L-histidine = ADP + protein N-phospho-L-histidine.. Functionally, member of the two-component regulatory system HssS/HssR involved in intracellular heme homeostasis and tempering of staphylococcal virulence. HssS functions as a heme sensor histidine kinase which is autophosphorylated at a histidine residue and transfers its phosphate group to an aspartate residue of HssR. HssR/HssS activates the expression of hrtAB, an efflux pump, in response to extracellular heme, hemin, hemoglobin or blood. The chain is Heme sensor protein HssS (hssS) from Staphylococcus saprophyticus subsp. saprophyticus (strain ATCC 15305 / DSM 20229 / NCIMB 8711 / NCTC 7292 / S-41).